Here is a 208-residue protein sequence, read N- to C-terminus: Thymidylate kinase (208 aa).

An ATP-binding site is contributed by G10 to T17.

It belongs to the thymidylate kinase family.

The enzyme catalyses dTMP + ATP = dTDP + ADP. Functionally, phosphorylation of dTMP to form dTDP in both de novo and salvage pathways of dTTP synthesis. The sequence is that of Thymidylate kinase from Ligilactobacillus salivarius (strain UCC118) (Lactobacillus salivarius).